Reading from the N-terminus, the 115-residue chain is Large ribosomal subunit protein bL20 (115 aa).

The protein belongs to the bacterial ribosomal protein bL20 family.

In terms of biological role, binds directly to 23S ribosomal RNA and is necessary for the in vitro assembly process of the 50S ribosomal subunit. It is not involved in the protein synthesizing functions of that subunit. The sequence is that of Large ribosomal subunit protein bL20 from Prochlorococcus marinus (strain MIT 9313).